The chain runs to 123 residues: Large ribosomal subunit protein uL18 (123 aa).

The protein belongs to the universal ribosomal protein uL18 family. Part of the 50S ribosomal subunit; part of the 5S rRNA/L5/L18/L25 subcomplex. Contacts the 5S and 23S rRNAs.

Functionally, this is one of the proteins that bind and probably mediate the attachment of the 5S RNA into the large ribosomal subunit, where it forms part of the central protuberance. The sequence is that of Large ribosomal subunit protein uL18 from Chlamydia trachomatis serovar L2 (strain ATCC VR-902B / DSM 19102 / 434/Bu).